The chain runs to 156 residues: Ribosomally synthesized cyclic peptide victorin precursosr vicA1 (156 aa).

The first 21 residues, 1 to 21 (MVRITALMSGSILLFALQALA), serve as a signal peptide directing secretion. Propeptides lie at residues 22–36 (MPVE…AEKR), 43–55 (KRGE…EEKR), 62–74 (KRGE…EEKR), 81–93 (KRGE…EEKR), 100–112 (KRGE…EEKR), 119–131 (KRGE…EEKR), and 138–150 (KRGE…EEKR).

In terms of processing, vicA1 is processed by several endopeptidases including kexin proteases as well as the cluster-specific peptidases vicP1 and vicP2 to produce 7 identical copies of the hexapeptide Gly-Leu-Lys-Leu-Ala-Phe, that are further modified to yield victorins. After being excised from the precursor peptide, the core peptides are cyclized and modified post-translationally by enzymes encoded within the gene cluster. The ustYa family protein vicYb is required for the formation of the macrocycle in victorin and the copper amine oxidases (CAOs) vicK1 and vicK2 are responsible for converting victorin to the active form by oxidizing the N-terminal glycyl residue in the peptides to glyoxylate. Relaxed substrate specificity of enzymes in the victorin biosynthetic pathway results in a metabolic grid that produces a set of analogs including victorinines B, C, E or HV-toxin M.

It participates in mycotoxin biosynthesis. Its function is as follows. Ribosomally synthesized cyclic peptide victorin precursor, part of the gene cluster that mediates the biosynthesis of the secondary metabolite victorin, the molecular basis for Victoria blight of oats. The vicA1 translated product contains a 7-fold repeated peptide embedding the hexapeptide Gly-Leu-Lys-Leu-Ala-Phe, that is converted into the cyclic victorin. This is Ribosomally synthesized cyclic peptide victorin precursosr vicA1 from Bipolaris victoriae (strain FI3) (Victoria blight of oats agent).